A 426-amino-acid polypeptide reads, in one-letter code: Serine hydroxymethyltransferase (426 aa).

Residues leucine 121 and 125 to 127 (GHL) contribute to the (6S)-5,6,7,8-tetrahydrofolate site. Lysine 230 is subject to N6-(pyridoxal phosphate)lysine. Residue 354–356 (SPF) participates in (6S)-5,6,7,8-tetrahydrofolate binding.

It belongs to the SHMT family. In terms of assembly, homodimer. Pyridoxal 5'-phosphate is required as a cofactor.

The protein localises to the cytoplasm. The enzyme catalyses (6R)-5,10-methylene-5,6,7,8-tetrahydrofolate + glycine + H2O = (6S)-5,6,7,8-tetrahydrofolate + L-serine. It functions in the pathway one-carbon metabolism; tetrahydrofolate interconversion. Its pathway is amino-acid biosynthesis; glycine biosynthesis; glycine from L-serine: step 1/1. In terms of biological role, catalyzes the reversible interconversion of serine and glycine with tetrahydrofolate (THF) serving as the one-carbon carrier. This reaction serves as the major source of one-carbon groups required for the biosynthesis of purines, thymidylate, methionine, and other important biomolecules. Also exhibits THF-independent aldolase activity toward beta-hydroxyamino acids, producing glycine and aldehydes, via a retro-aldol mechanism. The chain is Serine hydroxymethyltransferase from Gloeobacter violaceus (strain ATCC 29082 / PCC 7421).